A 430-amino-acid chain; its full sequence is UDP-glucuronate 4-epimerase 3 (430 aa).

2 helical membrane passes run 29 to 49 and 90 to 110; these read SVAK…IFFY and GFSV…SAAL. An NAD(+)-binding site is contributed by 92 to 123; it reads SVLVTGAAGFVGTHVSAALKRRGDGVLGLDNF. The Proton acceptor role is filled by tyrosine 242.

The protein belongs to the NAD(P)-dependent epimerase/dehydratase family. In terms of assembly, homodimer. In roots, leaves, siliques, flowers, pollen and stems.

The protein localises to the golgi apparatus. Its subcellular location is the golgi stack membrane. It catalyses the reaction UDP-alpha-D-glucuronate = UDP-alpha-D-galacturonate. In terms of biological role, involved in the synthesis of the negatively charged monosaccharide that forms the backbone of pectic cell wall components. The polypeptide is UDP-glucuronate 4-epimerase 3 (GAE3) (Arabidopsis thaliana (Mouse-ear cress)).